The sequence spans 153 residues: Histone H2B.6 (153 aa).

Basic and acidic residues-rich tracts occupy residues 1-28 (MAPKAEKKPAAKKPAEEEPAAEKAEKAP) and 36-53 (EKRLPAGKGEKGSGEGKK). Residues 1 to 60 (MAPKAEKKPAAKKPAEEEPAAEKAEKAPAGKKPKAEKRLPAGKGEKGSGEGKKAGRKKGK) form a disordered region. Lysine 7 and lysine 37 each carry N6-acetyllysine. Lysine 149 is covalently cross-linked (Glycyl lysine isopeptide (Lys-Gly) (interchain with G-Cter in ubiquitin)).

It belongs to the histone H2B family. The nucleosome is a histone octamer containing two molecules each of H2A, H2B, H3 and H4 assembled in one H3-H4 heterotetramer and two H2A-H2B heterodimers. The octamer wraps approximately 147 bp of DNA. In terms of processing, can be acetylated to form H2BK6ac and H2BK33ac. Post-translationally, monoubiquitinated by BRE1 to form H2BK143ub1 and deubiquitinated by UBP26. Required for heterochromatic histone H3 di- and trimethylation at H3K4me. May give a specific tag for epigenetic transcriptional activation.

The protein resides in the nucleus. Its subcellular location is the chromosome. Functionally, core component of nucleosome. Nucleosomes wrap and compact DNA into chromatin, limiting DNA accessibility to the cellular machineries which require DNA as a template. Histones thereby play a central role in transcription regulation, DNA repair, DNA replication and chromosomal stability. DNA accessibility is regulated via a complex set of post-translational modifications of histones, also called histone code, and nucleosome remodeling. In Oryza sativa subsp. indica (Rice), this protein is Histone H2B.6 (H2B.6).